We begin with the raw amino-acid sequence, 534 residues long: MAFHGIREVENYFIPFLQRVKSRNEWKKINASIIIHGLSQSSFMVTKMVDFCDKIEDMDYATRLFNQVSNPNVFLYNSIIRAYTHNSLYCDVIRIYKQLLRKSFELPDRFTFPFMFKSCASLGSCYLGKQVHGHLCKFGPRFHVVTENALIDMYMKFDDLVDAHKVFDEMYERDVISWNSLLSGYARLGQMKKAKGLFHLMLDKTIVSWTAMISGYTGIGCYVEAMDFFREMQLAGIEPDEISLISVLPSCAQLGSLELGKWIHLYAERRGFLKQTGVCNALIEMYSKCGVISQAIQLFGQMEGKDVISWSTMISGYAYHGNAHGAIETFNEMQRAKVKPNGITFLGLLSACSHVGMWQEGLRYFDMMRQDYQIEPKIEHYGCLIDVLARAGKLERAVEITKTMPMKPDSKIWGSLLSSCRTPGNLDVALVAMDHLVELEPEDMGNYVLLANIYADLGKWEDVSRLRKMIRNENMKKTPGGSLIEVNNIVQEFVSGDNSKPFWTEISIVLQLFTSHQDQDVITNNNALAFIGIV.

11 PPR repeats span residues 41-71 (SSFM…VSNP), 72-106 (NVFL…SFEL), 108-142 (DRFT…GPRF), 143-173 (HVVT…MYER), 174-208 (DVIS…TIVS), 209-239 (WTAM…GIEP), 240-274 (DEIS…GFLK), 275-305 (QTGV…MEGK), 306-340 (DVIS…KVKP), 341-371 (NGIT…MRQD), and 377-407 (KIEH…MPMK). A type E motif region spans residues 412–487 (IWGSLLSSCR…TPGGSLIEVN (76 aa)). The tract at residues 488 to 518 (NIVQEFVSGDNSKPFWTEISIVLQLFTSHQD) is type E(+) motif.

This sequence belongs to the PPR family. PCMP-E subfamily.

This chain is Pentatricopeptide repeat-containing protein At2g20540 (PCMP-E78), found in Arabidopsis thaliana (Mouse-ear cress).